Reading from the N-terminus, the 121-residue chain is Large ribosomal subunit protein uL24 (121 aa).

Belongs to the universal ribosomal protein uL24 family. As to quaternary structure, part of the 50S ribosomal subunit.

One of two assembly initiator proteins, it binds directly to the 5'-end of the 23S rRNA, where it nucleates assembly of the 50S subunit. Its function is as follows. Located at the polypeptide exit tunnel on the outside of the subunit. This chain is Large ribosomal subunit protein uL24, found in Methanocorpusculum labreanum (strain ATCC 43576 / DSM 4855 / Z).